The following is a 186-amino-acid chain: MNTIRNSICLTIITMVLCGFLFPLAITLIGQIFFYQQANGSLITYDNRIVGSKLIGQHWTETRYFHGRPSAVDYNMNPEKLYKNGVSSGGSNESNGNTELIARVKHHVKFDNSNVTIDAATSSGSGLDPHITVENALKQAPRIADARHISTSRVADLIQHRKQRGVLTNDYVNVLELNIALDKMKD.

Residues 10 to 30 traverse the membrane as a helical segment; that stretch reads LTIITMVLCGFLFPLAITLIG.

It belongs to the KdpC family. The system is composed of three essential subunits: KdpA, KdpB and KdpC.

It localises to the cell membrane. In terms of biological role, part of the high-affinity ATP-driven potassium transport (or Kdp) system, which catalyzes the hydrolysis of ATP coupled with the electrogenic transport of potassium into the cytoplasm. This subunit acts as a catalytic chaperone that increases the ATP-binding affinity of the ATP-hydrolyzing subunit KdpB by the formation of a transient KdpB/KdpC/ATP ternary complex. The protein is Potassium-transporting ATPase KdpC subunit of Staphylococcus aureus (strain MRSA252).